A 387-amino-acid polypeptide reads, in one-letter code: MAESSKVFKKSSGDGKLAIYLAKRDYVDHVDHVEPVDGMIIIDPEYQKDKKVFVTLACTFRYGRDDHELIGLSFKKELCFLHCQVYPPLPEDKKPLTPLQEKLSKKLGVNAFPFCFNMTTDLPCSVTLQPGPEDTGKKCGVDFEVKGFWADNVEEKISRKNSVQLIIRKVQFAPEATGTASCVQTTRQFMMSDKPLQVEVSLDKEVYYHGEPVGIKLKINNNTSKIVKKIKITVEQLTDVVLYSLDKYTKIVCCEEINETVAANANFSGSYSLTPLLANNKEKRGLALDGKLKHGDTNLASSTILRPGMDKEVLGMLVSYKVRVSLVVARGGILGDLTSSDVSVELPFTLMHPKPSPDQTNIEDVVIEEFARQKLQGAEGEDDKDDA.

Belongs to the arrestin family. As to expression, retina and pineal gland.

May play a role in an as yet undefined retina-specific signal transduction. Could bind to photoactivated-phosphorylated red/green opsins. The protein is Arrestin-C (arr3) of Xenopus laevis (African clawed frog).